Here is a 201-residue protein sequence, read N- to C-terminus: Protein TV1384 (201 aa).

Positions 11–200 (DIGAKAVMLA…EIEPNGKVEQ (190 aa)) constitute an AMMECR1 domain.

This is Protein TV1384 from Thermoplasma volcanium (strain ATCC 51530 / DSM 4299 / JCM 9571 / NBRC 15438 / GSS1).